A 745-amino-acid chain; its full sequence is VCP-like ATPase (745 aa).

ATP is bound by residues G231–T238 and G508–T515.

This sequence belongs to the AAA ATPase family. CDC48 subfamily. Homohexamer. Forms a ring-shaped particle.

The protein is VCP-like ATPase (vat) of Thermoplasma acidophilum (strain ATCC 25905 / DSM 1728 / JCM 9062 / NBRC 15155 / AMRC-C165).